A 432-amino-acid polypeptide reads, in one-letter code: 2-oxoglutarate-dependent dioxygenase AOP2 (432 aa).

A Fe2OG dioxygenase domain is found at 281 to 378; it reads SGDDVEANDD…RYTAAIFTCP (98 aa). Residues His-301, Asp-303, and His-358 each contribute to the Fe cation site. Residue Arg-369 participates in 2-oxoglutarate binding.

This sequence belongs to the iron/ascorbate-dependent oxidoreductase family. Fe(2+) serves as cofactor.

2-oxoglutarate-dependent dioxygenase involved in glucosinolates biosynthesis. Catalyzes the conversion of methylsulfinylalkyl glucosinolates to alkenyl glucosinolates. This chain is 2-oxoglutarate-dependent dioxygenase AOP2 (AOP2), found in Arabidopsis thaliana (Mouse-ear cress).